The sequence spans 330 residues: MNDYKDIWIFAEQRNGKLMNVAIEILGEARKLADKKGVNVGAVLIGHNVENLSKDLISFGADIVYVVDNPLLSNYTTEGYAKAISELAKEYKPEVILYGATFIGRDLAPRIASRLMTGLTADCTGLDIDENGLLLQTRPAFGGNLMATIKCPDKRPQMSTVRPGVMKRAIRDDTRDGKVIKFDADINESDIRTKILSIAKEAKNVVNLEEADIIVSGGRGIGGPDGFNIIKELADVLGGVVGASRATVDAGWITSDHQVGQTGKTVRPKLYIACGISGAIQHLAGMSNSGTIVAINKNPDAPIFKFADYGIVGDLFKVIPVLIEEIKKLK.

270–298 provides a ligand contact to FAD; the sequence is LYIACGISGAIQHLAGMSNSGTIVAINKN.

It belongs to the ETF alpha-subunit/FixB family. As to quaternary structure, heterodimer of an alpha and a beta subunit. It depends on FAD as a cofactor.

Functionally, the electron transfer flavoprotein serves as a specific electron acceptor for other dehydrogenases. It transfers the electrons to the main respiratory chain via ETF-ubiquinone oxidoreductase (ETF dehydrogenase). The chain is Electron transfer flavoprotein subunit alpha (etfA) from Thermoanaerobacterium thermosaccharolyticum (strain ATCC 7956 / DSM 571 / NCIMB 9385 / NCA 3814 / NCTC 13789 / WDCM 00135 / 2032) (Clostridium thermosaccharolyticum).